A 79-amino-acid polypeptide reads, in one-letter code: MEIIHYIVIIMTLLSSLASLLQRDLIKCIILSGFAGLCMAYLYYALLAPDVALTEAILGGAILPALFAFTVRRTQRIDE.

The next 2 helical transmembrane spans lie at 28-48 and 51-71; these read CIIL…ALLA and VALT…AFTV.

It is found in the cell membrane. This is an uncharacterized protein from Methanocaldococcus jannaschii (strain ATCC 43067 / DSM 2661 / JAL-1 / JCM 10045 / NBRC 100440) (Methanococcus jannaschii).